The sequence spans 698 residues: Polyribonucleotide nucleotidyltransferase (698 aa).

Mg(2+)-binding residues include D485 and D491. The 60-residue stretch at 552-611 folds into the KH domain; it reads PRITTIKINPEKIRDVIGKGGAVIRALTEETGTTIELDDNGTVKIASSNGEATKEAIRRI. An S1 motif domain is found at 621-689; it reads GRIYNGKVIR…RQGRVRLSIK (69 aa).

This sequence belongs to the polyribonucleotide nucleotidyltransferase family. As to quaternary structure, component of the RNA degradosome, which is a multiprotein complex involved in RNA processing and mRNA degradation. Mg(2+) serves as cofactor.

It localises to the cytoplasm. It catalyses the reaction RNA(n+1) + phosphate = RNA(n) + a ribonucleoside 5'-diphosphate. In terms of biological role, involved in mRNA degradation. Catalyzes the phosphorolysis of single-stranded polyribonucleotides processively in the 3'- to 5'-direction. The protein is Polyribonucleotide nucleotidyltransferase of Shewanella frigidimarina (strain NCIMB 400).